A 641-amino-acid polypeptide reads, in one-letter code: Transcription termination factor MTERF2, chloroplastic (641 aa).

Disordered regions lie at residues 54 to 80 (LKLN…DLDG) and 606 to 641 (FEAG…DLTE). Positions 610–641 (LDSEDSQPSDENISDQEIAFSDEAEEEEDLTE) are enriched in acidic residues.

This sequence belongs to the mTERF family.

The protein localises to the plastid. Its subcellular location is the chloroplast. Functionally, transcription termination factor involved in processing of plastid transcripts. Essential for embryogenesis. The protein is Transcription termination factor MTERF2, chloroplastic of Arabidopsis thaliana (Mouse-ear cress).